Consider the following 503-residue polypeptide: Phenylalanine--tRNA ligase alpha subunit (503 aa).

An N-acetylserine modification is found at Ser2. The tract at residues 2–173 is contains the major tRNA-Phe binding sites; the sequence is SDFQLEILKK…KRKLIAQGKI (172 aa). Residues Thr333, 374–376, and Tyr414 each bind L-phenylalanine; that span reads QVE. Glu416 provides a ligand contact to Mg(2+). Phe440 contributes to the L-phenylalanine binding site.

Belongs to the class-II aminoacyl-tRNA synthetase family. Phe-tRNA synthetase alpha subunit type 2 subfamily. Tetramer of two alpha and two beta subunits. The cofactor is Mg(2+).

The protein localises to the cytoplasm. The enzyme catalyses tRNA(Phe) + L-phenylalanine + ATP = L-phenylalanyl-tRNA(Phe) + AMP + diphosphate + H(+). This Saccharomyces cerevisiae (strain ATCC 204508 / S288c) (Baker's yeast) protein is Phenylalanine--tRNA ligase alpha subunit (FRS2).